A 283-amino-acid polypeptide reads, in one-letter code: Bifunctional protein FolD (283 aa).

Residues 165–167 (GRS) and Ser190 each bind NADP(+).

It belongs to the tetrahydrofolate dehydrogenase/cyclohydrolase family. In terms of assembly, homodimer.

It catalyses the reaction (6R)-5,10-methylene-5,6,7,8-tetrahydrofolate + NADP(+) = (6R)-5,10-methenyltetrahydrofolate + NADPH. The catalysed reaction is (6R)-5,10-methenyltetrahydrofolate + H2O = (6R)-10-formyltetrahydrofolate + H(+). Its pathway is one-carbon metabolism; tetrahydrofolate interconversion. Functionally, catalyzes the oxidation of 5,10-methylenetetrahydrofolate to 5,10-methenyltetrahydrofolate and then the hydrolysis of 5,10-methenyltetrahydrofolate to 10-formyltetrahydrofolate. The polypeptide is Bifunctional protein FolD (Variovorax paradoxus (strain S110)).